We begin with the raw amino-acid sequence, 498 residues long: Aldehyde dehydrogenase, mitochondrial (498 aa).

The transit peptide at 1–9 (MLRATLARL) directs the protein to the mitochondrion. 242–247 (GSTAVG) contributes to the NAD(+) binding site. Glutamate 265 serves as the catalytic Proton acceptor. Cysteine 299 functions as the Nucleophile in the catalytic mechanism.

It belongs to the aldehyde dehydrogenase family.

Its subcellular location is the mitochondrion. The enzyme catalyses an aldehyde + NAD(+) + H2O = a carboxylate + NADH + 2 H(+). The protein operates within alcohol metabolism; ethanol degradation; acetate from ethanol: step 2/2. In terms of biological role, could have an RNA-binding activity in addition of its catalytic role. The sequence is that of Aldehyde dehydrogenase, mitochondrial (ALDH2) from Leishmania tarentolae (Sauroleishmania tarentolae).